The chain runs to 796 residues: Phenylalanine--tRNA ligase beta subunit (796 aa).

The region spanning 39–149 (SAALKSFRVA…GDAPLGTTFA (111 aa)) is the tRNA-binding domain. The 73-residue stretch at 398–470 (LARKALAYDP…RVHGLDAVPS (73 aa)) folds into the B5 domain. Positions 448, 454, 457, and 458 each coordinate Mg(2+). The FDX-ACB domain maps to 703-795 (PALQAVTRDF…AAGKLGAELR (93 aa)).

It belongs to the phenylalanyl-tRNA synthetase beta subunit family. Type 1 subfamily. Tetramer of two alpha and two beta subunits. Mg(2+) is required as a cofactor.

It localises to the cytoplasm. It carries out the reaction tRNA(Phe) + L-phenylalanine + ATP = L-phenylalanyl-tRNA(Phe) + AMP + diphosphate + H(+). This chain is Phenylalanine--tRNA ligase beta subunit, found in Novosphingobium aromaticivorans (strain ATCC 700278 / DSM 12444 / CCUG 56034 / CIP 105152 / NBRC 16084 / F199).